The sequence spans 118 residues: Histone H2B.N (118 aa).

This sequence belongs to the histone H2B family. In terms of assembly, the nucleosome is a histone octamer containing two molecules each of H2A, H2B, H3 and H4 assembled in one H3-H4 heterotetramer and two H2A-H2B heterodimers. The octamer wraps approximately 147 bp of DNA. As to expression, expressed in germline. Predominantly expressed in oocytes.

Its subcellular location is the nucleus. It is found in the chromosome. In terms of biological role, core component of nucleosome. Nucleosomes wrap and compact DNA into chromatin, limiting DNA accessibility to the cellular machineries which require DNA as a template. Histones thereby play a central role in transcription regulation, DNA repair, DNA replication and chromosomal stability. DNA accessibility is regulated via a complex set of post-translational modifications of histones, also called histone code, and nucleosome remodeling. In Homo sapiens (Human), this protein is Histone H2B.N.